The sequence spans 141 residues: Large ribosomal subunit protein uL16 (141 aa).

It belongs to the universal ribosomal protein uL16 family. In terms of assembly, part of the 50S ribosomal subunit.

Its function is as follows. Binds 23S rRNA and is also seen to make contacts with the A and possibly P site tRNAs. This chain is Large ribosomal subunit protein uL16, found in Aliarcobacter butzleri (strain RM4018) (Arcobacter butzleri).